The following is a 366-amino-acid chain: UDP-N-acetylenolpyruvoylglucosamine reductase (366 aa).

Positions 29 to 203 (VGPVARTLVT…LEVEFALDAS (175 aa)) constitute an FAD-binding PCMH-type domain. Residue Arg177 is part of the active site. Ser258 acts as the Proton donor in catalysis. Residue Glu358 is part of the active site.

It belongs to the MurB family. It depends on FAD as a cofactor.

It is found in the cytoplasm. It catalyses the reaction UDP-N-acetyl-alpha-D-muramate + NADP(+) = UDP-N-acetyl-3-O-(1-carboxyvinyl)-alpha-D-glucosamine + NADPH + H(+). The protein operates within cell wall biogenesis; peptidoglycan biosynthesis. Functionally, cell wall formation. In Mycobacterium marinum (strain ATCC BAA-535 / M), this protein is UDP-N-acetylenolpyruvoylglucosamine reductase.